The following is a 261-amino-acid chain: Acetylglutamate kinase (261 aa).

Substrate contacts are provided by residues Gly46 to Gly47, Arg68, and Asn160.

Belongs to the acetylglutamate kinase family. ArgB subfamily.

The protein resides in the cytoplasm. It carries out the reaction N-acetyl-L-glutamate + ATP = N-acetyl-L-glutamyl 5-phosphate + ADP. It functions in the pathway amino-acid biosynthesis; L-arginine biosynthesis; N(2)-acetyl-L-ornithine from L-glutamate: step 2/4. Functionally, catalyzes the ATP-dependent phosphorylation of N-acetyl-L-glutamate. This is Acetylglutamate kinase from Shewanella loihica (strain ATCC BAA-1088 / PV-4).